We begin with the raw amino-acid sequence, 706 residues long: Choline transporter-like protein 2 (706 aa).

The Cytoplasmic portion of the chain corresponds to 1 to 33 (MGDERPHYYGKHGTPQKYDPTFKGPIYNRGCTD). Threonine 14 bears the Phosphothreonine mark. The helical transmembrane segment at 34-54 (IICCVFLLLAIVGYVAVGIIA) threads the bilayer. Over 55–232 (WTHGDPRKVI…RIFEDYTVSW (178 aa)) the chain is Extracellular. Asparagine 187 and asparagine 200 each carry an N-linked (GlcNAc...) asparagine glycan. Residues 233-253 (YWIIIGLVIAMAMSLLFIILL) form a helical membrane-spanning segment. The Cytoplasmic segment spans residues 254-256 (RFL). Residues 257–277 (AGIMVWVMIIMVILVLGYGIF) traverse the membrane as a helical segment. Over 278 to 315 (HCYMEYSRLRGEAGSDVSLVDLGFQTDFRVYLHLRQTW) the chain is Extracellular. Residues 316–336 (LAFMIILSILEVIIILLLIFL) traverse the membrane as a helical segment. At 337–364 (RKRILIAIALIKEASRAVGYVMCSLLYP) the chain is on the cytoplasmic side. The helical transmembrane segment at 365–385 (LVTFFLLCLCIAYWASTAVFL) threads the bilayer. Residues 386 to 457 (STSNEAVYKI…FNAFMFFWLA (72 aa)) are Extracellular-facing. N-linked (GlcNAc...) asparagine glycosylation occurs at asparagine 417. A helical transmembrane segment spans residues 458 to 480 (NFVLALGQVTLAGAFASYYWALR). At 481-504 (KPDDLPAFPLFSAFGRALRYHTGS) the chain is on the cytoplasmic side. Residues 505–525 (LAFGALILAIVQIIRVILEYL) traverse the membrane as a helical segment. Residues 526–563 (DQRLKAAENKFAKCLMTCLKCCFWCLEKFIKFLNRNAY) lie on the Extracellular side of the membrane. Residues 564–584 (IMIAIYGTNFCTSARNAFFLL) form a helical membrane-spanning segment. Topologically, residues 585–599 (MRNIIRVAVLDKVTD) are cytoplasmic. A helical transmembrane segment spans residues 600-620 (FLFLLGKLLIVGSVGILAFFF). Residues 621 to 638 (FTHRIRIVQDTAPPLNYY) are Extracellular-facing. Residues 639–659 (WVPILTVIVGSYLIAHGFFSV) traverse the membrane as a helical segment. At 660-706 (YGMCVDTLFLCFLEDLERNDGSAERPYFMSSTLKKLLNKTNKKAAES) the chain is on the cytoplasmic side.

Belongs to the CTL (choline transporter-like) family. As to quaternary structure, interacts with COCH. As to expression, present in supporting cells of the inner ear (at protein level). In terms of tissue distribution, expressed in inner ear vestibular tissue.

It is found in the cell membrane. The protein resides in the mitochondrion outer membrane. The enzyme catalyses choline(out) + n H(+)(in) = choline(in) + n H(+)(out). It carries out the reaction ethanolamine(out) + n H(+)(in) = ethanolamine(in) + n H(+)(out). Its function is as follows. Choline/H+ antiporter, mainly in mitochodria. Also acts as a low-affinity ethanolamine/H+ antiporter, regulating the supply of extracellular ethanolamine (Etn) for the CDP-Etn pathway, redistribute intracellular Etn and balance the CDP-Cho and CDP-Etn arms of the Kennedy pathway. In terms of biological role, does not exhibit choline transporter activity. This Homo sapiens (Human) protein is Choline transporter-like protein 2.